Consider the following 525-residue polypeptide: Lysine--tRNA ligase (525 aa).

The 'HIGH' region motif lies at 40-48; it reads ASGIPHMGS. Residues 295–299 carry the 'KMSKS' region motif; that stretch reads KISKS. ATP is bound at residue K298.

It belongs to the class-I aminoacyl-tRNA synthetase family.

It localises to the cytoplasm. The enzyme catalyses tRNA(Lys) + L-lysine + ATP = L-lysyl-tRNA(Lys) + AMP + diphosphate. This chain is Lysine--tRNA ligase (lysS), found in Cenarchaeum symbiosum (strain A).